We begin with the raw amino-acid sequence, 200 residues long: Imidazoleglycerol-phosphate dehydratase (200 aa).

This sequence belongs to the imidazoleglycerol-phosphate dehydratase family.

It localises to the cytoplasm. It catalyses the reaction D-erythro-1-(imidazol-4-yl)glycerol 3-phosphate = 3-(imidazol-4-yl)-2-oxopropyl phosphate + H2O. Its pathway is amino-acid biosynthesis; L-histidine biosynthesis; L-histidine from 5-phospho-alpha-D-ribose 1-diphosphate: step 6/9. The sequence is that of Imidazoleglycerol-phosphate dehydratase from Bifidobacterium animalis subsp. lactis (strain AD011).